A 63-amino-acid chain; its full sequence is Large ribosomal subunit protein bL32 (63 aa).

A disordered region spans residues 1 to 20 (MANPKAKMSKSRRDKRRAQF). Residues 7–18 (KMSKSRRDKRRA) show a composition bias toward basic residues.

The protein belongs to the bacterial ribosomal protein bL32 family.

The sequence is that of Large ribosomal subunit protein bL32 from Chlorobaculum parvum (strain DSM 263 / NCIMB 8327) (Chlorobium vibrioforme subsp. thiosulfatophilum).